A 459-amino-acid polypeptide reads, in one-letter code: Cysteine--tRNA ligase (459 aa).

Cysteine 28 serves as a coordination point for Zn(2+). The 'HIGH' region signature appears at 30–40; sequence ITIYDLCHIGH. Zn(2+) is bound by residues cysteine 209, histidine 234, and glutamate 238. Residues 266–270 carry the 'KMSKS' region motif; that stretch reads KMSKS. Lysine 269 lines the ATP pocket.

It belongs to the class-I aminoacyl-tRNA synthetase family. As to quaternary structure, monomer. Zn(2+) is required as a cofactor.

The protein localises to the cytoplasm. It carries out the reaction tRNA(Cys) + L-cysteine + ATP = L-cysteinyl-tRNA(Cys) + AMP + diphosphate. The sequence is that of Cysteine--tRNA ligase from Shewanella woodyi (strain ATCC 51908 / MS32).